Here is a 2282-residue protein sequence, read N- to C-terminus: Protein Ycf2 (2282 aa).

1635-1642 is an ATP binding site; sequence GSIGTGRS.

It belongs to the Ycf2 family.

It is found in the plastid. Its subcellular location is the chloroplast stroma. Its function is as follows. Probable ATPase of unknown function. Its presence in a non-photosynthetic plant (Epifagus virginiana) and experiments in tobacco indicate that it has an essential function which is probably not related to photosynthesis. This is Protein Ycf2 from Populus alba (White poplar).